A 166-amino-acid polypeptide reads, in one-letter code: Lipoprotein signal peptidase (166 aa).

4 helical membrane-spanning segments follow: residues 9-29 (ASGA…FDQL), 45-65 (ALTS…FGFL), 71-91 (WQRW…CFLL), and 100-120 (FSLS…DRLV). Residues Asp-126 and Asp-144 contribute to the active site. A helical transmembrane segment spans residues 135–155 (WHFPAFNLADSAITIGAVLLV).

Belongs to the peptidase A8 family.

Its subcellular location is the cell inner membrane. The enzyme catalyses Release of signal peptides from bacterial membrane prolipoproteins. Hydrolyzes -Xaa-Yaa-Zaa-|-(S,diacylglyceryl)Cys-, in which Xaa is hydrophobic (preferably Leu), and Yaa (Ala or Ser) and Zaa (Gly or Ala) have small, neutral side chains.. It functions in the pathway protein modification; lipoprotein biosynthesis (signal peptide cleavage). Functionally, this protein specifically catalyzes the removal of signal peptides from prolipoproteins. The sequence is that of Lipoprotein signal peptidase from Burkholderia ambifaria (strain ATCC BAA-244 / DSM 16087 / CCUG 44356 / LMG 19182 / AMMD) (Burkholderia cepacia (strain AMMD)).